Here is a 99-residue protein sequence, read N- to C-terminus: Elongin-C (99 aa).

Residue Ser-2 is modified to N-acetylserine. Ser-2 is modified (phosphoserine).

The protein belongs to the SKP1 family. As to quaternary structure, heterodimer with ELA1. Component of a CRL3 E3 ubiquitin ligase complex consisting of the cullin CUL3, the linker protein ELC1, the substrate receptor ELA1, and the RING protein HRT1. Interacts with CIN5. Interacts with PCL6. Interacts with SNF4. Interacts with the large RNA polymerase II subunit RPO21 in a manner dependent on DEF1. Interacts with DEF1. Interacts with RAD7. Interacts with RAD16.

It is found in the cytoplasm. The protein localises to the nucleus. Functionally, as part of the CRL3 E3 ubiquitin ligase complex; polyubiquitylates monoubiquitylated RNA polymerase II subunit RPO21 to trigger its proteolysis; plays a role in global genomic repair. Prevents degradation of interacting proteins like PCL6 by the proteasome. The sequence is that of Elongin-C (ELC1) from Saccharomyces cerevisiae (strain ATCC 204508 / S288c) (Baker's yeast).